Here is a 234-residue protein sequence, read N- to C-terminus: Large ribosomal subunit protein uL1 (234 aa).

The protein belongs to the universal ribosomal protein uL1 family. In terms of assembly, part of the 50S ribosomal subunit.

In terms of biological role, binds directly to 23S rRNA. The L1 stalk is quite mobile in the ribosome, and is involved in E site tRNA release. Functionally, protein L1 is also a translational repressor protein, it controls the translation of the L11 operon by binding to its mRNA. This chain is Large ribosomal subunit protein uL1, found in Salmonella agona (strain SL483).